The chain runs to 282 residues: ATP synthase gamma chain (282 aa).

The protein belongs to the ATPase gamma chain family. F-type ATPases have 2 components, CF(1) - the catalytic core - and CF(0) - the membrane proton channel. CF(1) has five subunits: alpha(3), beta(3), gamma(1), delta(1), epsilon(1). CF(0) has three main subunits: a, b and c.

The protein resides in the cell inner membrane. Functionally, produces ATP from ADP in the presence of a proton gradient across the membrane. The gamma chain is believed to be important in regulating ATPase activity and the flow of protons through the CF(0) complex. The chain is ATP synthase gamma chain from Fusobacterium nucleatum subsp. nucleatum (strain ATCC 25586 / DSM 15643 / BCRC 10681 / CIP 101130 / JCM 8532 / KCTC 2640 / LMG 13131 / VPI 4355).